The sequence spans 110 residues: Endoribonuclease SymE (110 aa).

The SpoVT-AbrB domain maps to 29–74 (SRYPDYTRIPALTMKGQWLEAAGFATGTEVDVRVMNGCIVLTAQQP).

The protein belongs to the SymE family.

The protein resides in the cytoplasm. In terms of biological role, involved in the degradation and recycling of damaged RNA. It is itself a target for degradation by the ATP-dependent protease Lon. This is Endoribonuclease SymE from Salmonella heidelberg (strain SL476).